The chain runs to 202 residues: LexA repressor (202 aa).

A DNA-binding region (H-T-H motif) is located at residues R28 to K48. Catalysis depends on for autocatalytic cleavage activity residues S123 and K160.

The protein belongs to the peptidase S24 family. As to quaternary structure, homodimer.

The enzyme catalyses Hydrolysis of Ala-|-Gly bond in repressor LexA.. In terms of biological role, represses a number of genes involved in the response to DNA damage (SOS response), including recA and lexA. In the presence of single-stranded DNA, RecA interacts with LexA causing an autocatalytic cleavage which disrupts the DNA-binding part of LexA, leading to derepression of the SOS regulon and eventually DNA repair. The polypeptide is LexA repressor (Pseudomonas putida (Arthrobacter siderocapsulatus)).